We begin with the raw amino-acid sequence, 889 residues long: Mitochondrial intermediate peptidase (889 aa).

Residues 1 to 30 (MASTSKNAQRAAASVAHSYHVCLARRMSRL) constitute a mitochondrion transit peptide. Positions 60-112 (SSSLAAQRVQRPTSAGPILTNPISDHEKDNDELRSLFDAPPTSSSANHLRSSG) are disordered. A compositionally biased stretch (basic and acidic residues) spans 83 to 94 (SDHEKDNDELRS). A compositionally biased stretch (polar residues) spans 100-112 (PTSSSANHLRSSG). His670 contacts Zn(2+). The active site involves Glu671. Residues His674 and His677 each contribute to the Zn(2+) site.

Belongs to the peptidase M3 family. Zn(2+) is required as a cofactor.

It localises to the mitochondrion matrix. It carries out the reaction Release of an N-terminal octapeptide as second stage of processing of some proteins imported into the mitochondrion.. Functionally, cleaves proteins, imported into the mitochondrion, to their mature size. While most mitochondrial precursor proteins are processed to the mature form in one step by mitochondrial processing peptidase (MPP), the sequential cleavage by MIP of an octapeptide after initial processing by MPP is a required step for a subgroup of nuclear-encoded precursor proteins destined for the matrix or the inner membrane. This Mycosarcoma maydis (Corn smut fungus) protein is Mitochondrial intermediate peptidase (OCT1).